We begin with the raw amino-acid sequence, 821 residues long: Serine/threonine-protein kinase CTR1 (821 aa).

2 disordered regions span residues 1–76 and 481–502; these read MEMP…LNNQ and NPGGENDALAENGGGSLPPSAN. Low complexity predominate over residues 14 to 25; it reads SQFSDDQVSVSV. Positions 35–49 are enriched in polar residues; that stretch reads SLSSENRSNHNSGNT. In terms of domain architecture, Protein kinase spans 551-809; that stretch reads LNIKEKIGAG…TIMDLLRPLI (259 aa). ATP contacts are provided by residues 557–565 and K578; that span reads IGAGSFGTV. Catalysis depends on D676, which acts as the Proton acceptor.

This sequence belongs to the protein kinase superfamily. TKL Ser/Thr protein kinase family. RAF subfamily. As to quaternary structure, interacts with EIN2 (via C-terminus). As to expression, expressed in both seedlings and adult plants.

It catalyses the reaction L-seryl-[protein] + ATP = O-phospho-L-seryl-[protein] + ADP + H(+). The enzyme catalyses L-threonyl-[protein] + ATP = O-phospho-L-threonyl-[protein] + ADP + H(+). Kinase activity is inhibited by C24:1-ceramide during hypoxia (e.g. submergences). In terms of biological role, acts as a negative regulator in the ethylene response pathway. Phosphorylates the cytosolic C-terminal domain of EIN2, preventing the signaling in the absence of ethylene. Interacts with C24:1-ceramide upon hypoxic conditions (e.g. submergences) to in turn regulate EIN2 endoplasmic reticulum (ER)-to-nucleus translocation and EIN3 stabilization. The sequence is that of Serine/threonine-protein kinase CTR1 from Arabidopsis thaliana (Mouse-ear cress).